The following is a 352-amino-acid chain: Inorganic triphosphatase (352 aa).

The 198-residue stretch at 6–203 (LQEIELKLAI…KRGYLLGSKQ (198 aa)) folds into the CYTH domain.

It catalyses the reaction triphosphate + H2O = phosphate + diphosphate. Involved in the hydrolysis of the beta-gamma-phosphoanhydride linkage of triphosphate-containing substrates (inorganic or nucleoside-linked). Catalyzes the hydrolysis of inorganic triphosphate (PPPi), which could be cytotoxic because of its high affinity for calcium ion, thereby interfering with calcium signaling. The chain is Inorganic triphosphatase from Haemophilus influenzae (strain ATCC 51907 / DSM 11121 / KW20 / Rd).